Here is a 205-residue protein sequence, read N- to C-terminus: Holliday junction branch migration complex subunit RuvA (205 aa).

A domain I region spans residues 1–64 (MIGRLRGIIL…EDAQLLYGFN (64 aa)). Positions 65–143 (DKQERALFRE…GLNGDLFNNT (79 aa)) are domain II. The flexible linker stretch occupies residues 144-156 (GDIQLPASNSSQI). A domain III region spans residues 157–205 (SDADIEAEAASALVALGYKPQEASRLVSKIAKPGADCETLIRDALRAAL).

This sequence belongs to the RuvA family. Homotetramer. Forms an RuvA(8)-RuvB(12)-Holliday junction (HJ) complex. HJ DNA is sandwiched between 2 RuvA tetramers; dsDNA enters through RuvA and exits via RuvB. An RuvB hexamer assembles on each DNA strand where it exits the tetramer. Each RuvB hexamer is contacted by two RuvA subunits (via domain III) on 2 adjacent RuvB subunits; this complex drives branch migration. In the full resolvosome a probable DNA-RuvA(4)-RuvB(12)-RuvC(2) complex forms which resolves the HJ.

It is found in the cytoplasm. Its function is as follows. The RuvA-RuvB-RuvC complex processes Holliday junction (HJ) DNA during genetic recombination and DNA repair, while the RuvA-RuvB complex plays an important role in the rescue of blocked DNA replication forks via replication fork reversal (RFR). RuvA specifically binds to HJ cruciform DNA, conferring on it an open structure. The RuvB hexamer acts as an ATP-dependent pump, pulling dsDNA into and through the RuvAB complex. HJ branch migration allows RuvC to scan DNA until it finds its consensus sequence, where it cleaves and resolves the cruciform DNA. This chain is Holliday junction branch migration complex subunit RuvA, found in Yersinia enterocolitica serotype O:8 / biotype 1B (strain NCTC 13174 / 8081).